A 299-amino-acid chain; its full sequence is Cycloserine biosynthesis protein DcsG (299 aa).

The ATP site is built by Lys92, Lys137, Ser144, Gln175, Pro176, and Val178. Residues 95 to 298 (LADLAAHGVP…FAQALAERLK (204 aa)) form the ATP-grasp domain. Catalysis depends on residues Arg220 and Arg254. The Mg(2+) site is built by Glu269 and Glu271. Glu271 is a catalytic residue.

Monomer. Mg(2+) serves as cofactor.

It carries out the reaction O-ureido-D-serine + ATP + H2O + H(+) = D-cycloserine + NH4(+) + ADP + phosphate + CO2. In terms of biological role, involved in the biosynthesis of the antibiotic D-cycloserine (DCS), a cyclic structural analog of D-alanine, used as an antitubercular agent. Catalyzes the synthesis of D-cycloserine from O-ureido-D-serine (D-OUS). It reacts with D-OUS, D-homocysteine and beta-aminooxy-D-alanine. In Streptomyces lavendulae, this protein is Cycloserine biosynthesis protein DcsG.